The sequence spans 182 residues: SAGA-associated factor 11 homolog (182 aa).

Residues 61-84 (GSGAAVEGEPEDSKPYTIVDQPDT) are disordered. The SGF11-type zinc finger occupies 98–119 (CHCPNCNRIVAASRFAPHLEKC). Residues 133-182 (RIANTRDVGTGNYFGGDEDDEDDADWSGEKRKKKISQVRTNGSKKNGKTS) are disordered. Residues 148 to 158 (GDEDDEDDADW) are compositionally biased toward acidic residues.

This sequence belongs to the SGF11 family. In terms of assembly, component of some SAGA transcription coactivator-HAT complexes. Within the SAGA complex, participates in a subcomplex of SAGA called the DUB module (deubiquitination module).

Its subcellular location is the nucleus. Functionally, component of the transcription regulatory histone acetylation (HAT) complex SAGA, a multiprotein complex that activates transcription by remodeling chromatin and mediating histone acetylation and deubiquitination. Within the SAGA complex, participates in a subcomplex that specifically deubiquitinates histone H2B. The SAGA complex is recruited to specific gene promoters by activators, where it is required for transcription. The chain is SAGA-associated factor 11 homolog from Anopheles gambiae (African malaria mosquito).